The sequence spans 367 residues: Quinolinate synthase (367 aa).

Iminosuccinate-binding residues include H46 and S63. C110 lines the [4Fe-4S] cluster pocket. Iminosuccinate is bound by residues 141–143 and S162; that span reads YVN. C229 serves as a coordination point for [4Fe-4S] cluster. Residues 255–257 and T272 contribute to the iminosuccinate site; that span reads HPE. Residue C319 participates in [4Fe-4S] cluster binding.

It belongs to the quinolinate synthase family. Type 3 subfamily. It depends on [4Fe-4S] cluster as a cofactor.

Its subcellular location is the cytoplasm. It catalyses the reaction iminosuccinate + dihydroxyacetone phosphate = quinolinate + phosphate + 2 H2O + H(+). The protein operates within cofactor biosynthesis; NAD(+) biosynthesis; quinolinate from iminoaspartate: step 1/1. Its function is as follows. Catalyzes the condensation of iminoaspartate with dihydroxyacetone phosphate to form quinolinate. The polypeptide is Quinolinate synthase (Bacillus velezensis (strain DSM 23117 / BGSC 10A6 / LMG 26770 / FZB42) (Bacillus amyloliquefaciens subsp. plantarum)).